The chain runs to 193 residues: Phosphoheptose isomerase (193 aa).

One can recognise an SIS domain in the interval 37-193 (LADSFKAGGK…QLIEKEMVKA (157 aa)). 52–54 (NGG) serves as a coordination point for substrate. Zn(2+) is bound by residues His-61 and Glu-65. Residues Glu-65, 93–94 (ND), 119–121 (STS), Ser-124, and Gln-172 contribute to the substrate site. Residues Gln-172 and His-180 each coordinate Zn(2+).

Belongs to the SIS family. GmhA subfamily. Homotetramer. Zn(2+) is required as a cofactor.

It localises to the cytoplasm. The catalysed reaction is 2 D-sedoheptulose 7-phosphate = D-glycero-alpha-D-manno-heptose 7-phosphate + D-glycero-beta-D-manno-heptose 7-phosphate. It functions in the pathway carbohydrate biosynthesis; D-glycero-D-manno-heptose 7-phosphate biosynthesis; D-glycero-alpha-D-manno-heptose 7-phosphate and D-glycero-beta-D-manno-heptose 7-phosphate from sedoheptulose 7-phosphate: step 1/1. In terms of biological role, catalyzes the isomerization of sedoheptulose 7-phosphate in D-glycero-D-manno-heptose 7-phosphate. This Yersinia enterocolitica serotype O:8 / biotype 1B (strain NCTC 13174 / 8081) protein is Phosphoheptose isomerase.